Reading from the N-terminus, the 455-residue chain is Killer cell immunoglobulin-like receptor 3DL2 (455 aa).

The N-terminal stretch at 1-21 (MSLTVVSMACVGFFLLQGAWP) is a signal peptide. Residues 22 to 340 (LMGGQDKPFL…SKSGICRHLH (319 aa)) lie on the Extracellular side of the membrane. Ig-like C2-type domains follow at residues 42-102 (GGHV…RPHS), 137-202 (GETV…VPHS), and 237-300 (GENV…FRAL). 2 cysteine pairs are disulfide-bonded: C49-C95 and C144-C195. 4 N-linked (GlcNAc...) asparagine glycosylation sites follow: N179, N239, N273, and N306. A disulfide bridge connects residues C244 and C293. Residues 341–360 (VLIGTSVVIFLFILLLFFLL) form a helical membrane-spanning segment. Residues 361 to 455 (YRWCSNKKNA…APQSGLEGVF (95 aa)) lie on the Cytoplasmic side of the membrane.

The protein belongs to the immunoglobulin superfamily. Interacts with peptide-free HLA-F open conformer. As to expression, expressed in astrocytes.

The protein resides in the cell membrane. Its function is as follows. Receptor on natural killer (NK) cells and T cells for MHC class I molecules. Upon binding of peptide-free HLA-F open conformer, negatively regulates NK and T cell effector functions. Acts as a receptor on astrocytes for HLA-F. Through interaction with HLA-F, may protect motor neurons from astrocyte-induced toxicity. This Homo sapiens (Human) protein is Killer cell immunoglobulin-like receptor 3DL2.